The following is a 120-amino-acid chain: U13-lycotoxin-Ls1d (120 aa).

An N-terminal signal peptide occupies residues 1 to 16; the sequence is MKILFVLISILYAVYC. A propeptide spanning residues 17–54 is cleaved from the precursor; sequence FSSEEDVDSAYLANELEPVEDINSEQYAALEPKEEQER. 4 disulfide bridges follow: Cys56-Cys70, Cys63-Cys76, Cys69-Cys87, and Cys78-Cys85. In terms of domain architecture, Agouti spans 56–95; sequence CADMGQDCKDDCDCCLNIATCNCRFGRYFCSCTFGDYQTC.

It belongs to the neurotoxin 05 (agouti) family. Contains 6 disulfide bonds. As to expression, expressed by the venom gland.

Its subcellular location is the secreted. In Lycosa singoriensis (Wolf spider), this protein is U13-lycotoxin-Ls1d.